Here is a 548-residue protein sequence, read N- to C-terminus: Serine/threonine-protein phosphatase 2A 56 kDa regulatory subunit delta 1 isoform (548 aa).

The segment covering 1 to 10 (MKGIKSKMLS) has biased composition (basic residues). Residues 1 to 75 (MKGIKSKMLS…KKVPIDTTPT (75 aa)) are disordered. Over residues 27–39 (KKSNSHDSSKAPK) the composition is skewed to basic and acidic residues. The residue at position 96 (Y96) is a Phosphotyrosine. Residues S99, S109, and S542 each carry the phosphoserine modification.

It belongs to the phosphatase 2A regulatory subunit B family. PP2A consists of a common heterodimeric core enzyme, composed of a 36 kDa catalytic subunit (subunit C) and a 65 kDa constant regulatory subunit (PR65 or subunit A), that associates with a variety of regulatory subunits. Proteins that associate with the core dimer include three families of regulatory subunits B (the R2/B/PR55/B55, R3/B''/PR72/PR130/PR59 and R5/B'/B56 families), the 48 kDa variable regulatory subunit, viral proteins, and cell signaling molecules.

Its subcellular location is the cytoplasm. The protein resides in the nucleus. Its function is as follows. The B regulatory subunit might modulate substrate selectivity and catalytic activity, and might also direct the localization of the catalytic enzyme to a particular subcellular compartment. Has a role in cell shape control and septum formation. This is Serine/threonine-protein phosphatase 2A 56 kDa regulatory subunit delta 1 isoform (par1) from Schizosaccharomyces pombe (strain 972 / ATCC 24843) (Fission yeast).